The sequence spans 321 residues: Lipoyl synthase (321 aa).

7 residues coordinate [4Fe-4S] cluster: cysteine 68, cysteine 73, cysteine 79, cysteine 94, cysteine 98, cysteine 101, and serine 308. Residues 80–297 enclose the Radical SAM core domain; sequence FNHGTATFMI…KALADELGFT (218 aa).

It belongs to the radical SAM superfamily. Lipoyl synthase family. The cofactor is [4Fe-4S] cluster.

The protein localises to the cytoplasm. The catalysed reaction is [[Fe-S] cluster scaffold protein carrying a second [4Fe-4S](2+) cluster] + N(6)-octanoyl-L-lysyl-[protein] + 2 oxidized [2Fe-2S]-[ferredoxin] + 2 S-adenosyl-L-methionine + 4 H(+) = [[Fe-S] cluster scaffold protein] + N(6)-[(R)-dihydrolipoyl]-L-lysyl-[protein] + 4 Fe(3+) + 2 hydrogen sulfide + 2 5'-deoxyadenosine + 2 L-methionine + 2 reduced [2Fe-2S]-[ferredoxin]. It functions in the pathway protein modification; protein lipoylation via endogenous pathway; protein N(6)-(lipoyl)lysine from octanoyl-[acyl-carrier-protein]: step 2/2. Catalyzes the radical-mediated insertion of two sulfur atoms into the C-6 and C-8 positions of the octanoyl moiety bound to the lipoyl domains of lipoate-dependent enzymes, thereby converting the octanoylated domains into lipoylated derivatives. The protein is Lipoyl synthase of Shewanella frigidimarina (strain NCIMB 400).